Here is an 88-residue protein sequence, read N- to C-terminus: MNKKISLHSSSGPVKKTGSVEFQIYHLTNQVIKLTSHLKQHSKDYSSQRGLWKMLGKRKRLLVYLSKNDINCYENLINKLGIRGLKIR.

Belongs to the universal ribosomal protein uS15 family. Part of the 30S ribosomal subunit.

Its subcellular location is the plastid. The protein localises to the chloroplast. This chain is Small ribosomal subunit protein uS15c (rps15), found in Angiopteris evecta (Mule's foot fern).